Here is a 267-residue protein sequence, read N- to C-terminus: tRNA pseudouridine synthase A (267 aa).

D52 acts as the Nucleophile in catalysis. Y113 is a binding site for substrate.

It belongs to the tRNA pseudouridine synthase TruA family. As to quaternary structure, homodimer.

The enzyme catalyses uridine(38/39/40) in tRNA = pseudouridine(38/39/40) in tRNA. Functionally, formation of pseudouridine at positions 38, 39 and 40 in the anticodon stem and loop of transfer RNAs. The protein is tRNA pseudouridine synthase A of Chlamydia pneumoniae (Chlamydophila pneumoniae).